A 227-amino-acid chain; its full sequence is Putative ankyrin repeat protein RF_0314 (227 aa).

ANK repeat units lie at residues 94 to 126, 130 to 164, and 168 to 199; these read NGCTFLHYSVEDVKVLYDNIPQFLLEKGADPNI, DGNTPLHILINRDFFSSKEIYVAKLLIQYGADIEL, and LGWTPIQCFIQAGNIKLKALLQLVKACKDNDF.

In Rickettsia felis (strain ATCC VR-1525 / URRWXCal2) (Rickettsia azadi), this protein is Putative ankyrin repeat protein RF_0314.